The sequence spans 408 residues: D-inositol 3-phosphate glycosyltransferase (408 aa).

Residue H7 coordinates 1D-myo-inositol 3-phosphate. UDP-N-acetyl-alpha-D-glucosamine is bound by residues Q13 to P14 and G21. Residues D18 to N23, K76, Y109, T133, and R153 contribute to the 1D-myo-inositol 3-phosphate site. 3 residues coordinate UDP-N-acetyl-alpha-D-glucosamine: R227, K232, and V288. Mg(2+) is bound by residues F297, R298, and A300. E310 and E318 together coordinate UDP-N-acetyl-alpha-D-glucosamine. T324 provides a ligand contact to Mg(2+).

Belongs to the glycosyltransferase group 1 family. MshA subfamily. As to quaternary structure, homodimer.

It catalyses the reaction 1D-myo-inositol 3-phosphate + UDP-N-acetyl-alpha-D-glucosamine = 1D-myo-inositol 2-acetamido-2-deoxy-alpha-D-glucopyranoside 3-phosphate + UDP + H(+). In terms of biological role, catalyzes the transfer of a N-acetyl-glucosamine moiety to 1D-myo-inositol 3-phosphate to produce 1D-myo-inositol 2-acetamido-2-deoxy-glucopyranoside 3-phosphate in the mycothiol biosynthesis pathway. This chain is D-inositol 3-phosphate glycosyltransferase, found in Paenarthrobacter aurescens (strain TC1).